Here is a 319-residue protein sequence, read N- to C-terminus: L-lactate dehydrogenase 2 (319 aa).

Residues valine 16, aspartate 37, lysine 42, tyrosine 68, and 82 to 83 (GA) each bind NAD(+). The substrate site is built by glutamine 85 and arginine 91. NAD(+) is bound by residues serine 104, 121–123 (AAN), and serine 146. 123–126 (NPVD) is a binding site for substrate. Residue 151–154 (DSAR) coordinates substrate. Histidine 178 acts as the Proton acceptor in catalysis. The residue at position 222 (tyrosine 222) is a Phosphotyrosine. Threonine 231 contributes to the substrate binding site.

It belongs to the LDH/MDH superfamily. LDH family. As to quaternary structure, homotetramer.

It is found in the cytoplasm. It catalyses the reaction (S)-lactate + NAD(+) = pyruvate + NADH + H(+). It participates in fermentation; pyruvate fermentation to lactate; (S)-lactate from pyruvate: step 1/1. Catalyzes the conversion of lactate to pyruvate (Potential). Contributes to S.aureus growth during nitrosative stress in both aerobically and anaerobically cultured cells, despite playing a secondary role in this resistance mechanism. This chain is L-lactate dehydrogenase 2, found in Staphylococcus aureus (strain Mu3 / ATCC 700698).